A 193-amino-acid polypeptide reads, in one-letter code: MTAHVGVLALQGDTREHLAALREAGAEASTVRRLSELAAVDALVIPGGESTAISHLLREFDLLEPLRARIAEGMPCYGSCAGMILLATEIADAGVPGRAAVPLKGIDMTVRRNAFGRQVDSFEGDIDFVGLDTPVHAVFIRAPWVERIGPDVEVLARADDHIVAVRQGPMFATAFHPEVTGDRRIHKLFVDSL.

48–50 (GES) is a binding site for L-glutamine. Cys-80 functions as the Nucleophile in the catalytic mechanism. L-glutamine contacts are provided by residues Arg-112 and 140-141 (IR). Residues His-176 and Glu-178 each act as charge relay system in the active site.

It belongs to the glutaminase PdxT/SNO family. In terms of assembly, in the presence of PdxS, forms a dodecamer of heterodimers. Only shows activity in the heterodimer.

It catalyses the reaction aldehydo-D-ribose 5-phosphate + D-glyceraldehyde 3-phosphate + L-glutamine = pyridoxal 5'-phosphate + L-glutamate + phosphate + 3 H2O + H(+). The enzyme catalyses L-glutamine + H2O = L-glutamate + NH4(+). The protein operates within cofactor biosynthesis; pyridoxal 5'-phosphate biosynthesis. Functionally, catalyzes the hydrolysis of glutamine to glutamate and ammonia as part of the biosynthesis of pyridoxal 5'-phosphate. The resulting ammonia molecule is channeled to the active site of PdxS. The polypeptide is Pyridoxal 5'-phosphate synthase subunit PdxT (Mycolicibacterium smegmatis (strain ATCC 700084 / mc(2)155) (Mycobacterium smegmatis)).